The following is a 428-amino-acid chain: Serine--tRNA ligase (428 aa).

235 to 237 is a binding site for L-serine; it reads TAE. An ATP-binding site is contributed by 266–268; the sequence is RSE. E289 contributes to the L-serine binding site. 353 to 356 contacts ATP; it reads EISS. S389 lines the L-serine pocket.

It belongs to the class-II aminoacyl-tRNA synthetase family. Type-1 seryl-tRNA synthetase subfamily. As to quaternary structure, homodimer. The tRNA molecule binds across the dimer.

The protein localises to the cytoplasm. It catalyses the reaction tRNA(Ser) + L-serine + ATP = L-seryl-tRNA(Ser) + AMP + diphosphate + H(+). The enzyme catalyses tRNA(Sec) + L-serine + ATP = L-seryl-tRNA(Sec) + AMP + diphosphate + H(+). It participates in aminoacyl-tRNA biosynthesis; selenocysteinyl-tRNA(Sec) biosynthesis; L-seryl-tRNA(Sec) from L-serine and tRNA(Sec): step 1/1. Catalyzes the attachment of serine to tRNA(Ser). Is also able to aminoacylate tRNA(Sec) with serine, to form the misacylated tRNA L-seryl-tRNA(Sec), which will be further converted into selenocysteinyl-tRNA(Sec). This chain is Serine--tRNA ligase, found in Shewanella sp. (strain ANA-3).